The chain runs to 873 residues: Bifunctional uridylyltransferase/uridylyl-removing enzyme (873 aa).

Positions Met1–Ile332 are uridylyltransferase. The segment at Ile333–Thr692 is uridylyl-removing. Positions Val451–Leu573 constitute an HD domain. ACT domains follow at residues Glu693–Arg773 and Leu800–Pro873.

Belongs to the GlnD family. Mg(2+) is required as a cofactor.

It catalyses the reaction [protein-PII]-L-tyrosine + UTP = [protein-PII]-uridylyl-L-tyrosine + diphosphate. The catalysed reaction is [protein-PII]-uridylyl-L-tyrosine + H2O = [protein-PII]-L-tyrosine + UMP + H(+). Uridylyltransferase (UTase) activity is inhibited by glutamine, while glutamine activates uridylyl-removing (UR) activity. In terms of biological role, modifies, by uridylylation and deuridylylation, the PII regulatory proteins (GlnB and homologs), in response to the nitrogen status of the cell that GlnD senses through the glutamine level. Under low glutamine levels, catalyzes the conversion of the PII proteins and UTP to PII-UMP and PPi, while under higher glutamine levels, GlnD hydrolyzes PII-UMP to PII and UMP (deuridylylation). Thus, controls uridylylation state and activity of the PII proteins, and plays an important role in the regulation of nitrogen assimilation and metabolism. The protein is Bifunctional uridylyltransferase/uridylyl-removing enzyme of Vibrio vulnificus (strain YJ016).